A 214-amino-acid polypeptide reads, in one-letter code: 3,4-dihydroxy-2-butanone 4-phosphate synthase (214 aa).

Residues 37–38, Asp-42, 150–154, and Glu-174 contribute to the D-ribulose 5-phosphate site; these read RE and RRGHT. Glu-38 serves as a coordination point for Mg(2+). His-153 contributes to the Mg(2+) binding site.

The protein belongs to the DHBP synthase family. Homodimer. Mg(2+) is required as a cofactor. The cofactor is Mn(2+).

It carries out the reaction D-ribulose 5-phosphate = (2S)-2-hydroxy-3-oxobutyl phosphate + formate + H(+). The protein operates within cofactor biosynthesis; riboflavin biosynthesis; 2-hydroxy-3-oxobutyl phosphate from D-ribulose 5-phosphate: step 1/1. Functionally, catalyzes the conversion of D-ribulose 5-phosphate to formate and 3,4-dihydroxy-2-butanone 4-phosphate. This Histophilus somni (strain 2336) (Haemophilus somnus) protein is 3,4-dihydroxy-2-butanone 4-phosphate synthase.